The chain runs to 253 residues: Adenosylcobinamide-GDP ribazoletransferase (253 aa).

4 consecutive transmembrane segments (helical) span residues 33–53 (ISPIIVGISLGLIESVAYLIL), 106–126 (VGSGGIGLLLVYLSIQIVALL), 132–152 (LYTIFYLISSNVLSMSLSLYI), and 178–198 (ILLLELIPFISLYNVIVFIIF).

Belongs to the CobS family. Mg(2+) serves as cofactor.

The protein localises to the cell membrane. The catalysed reaction is alpha-ribazole + adenosylcob(III)inamide-GDP = adenosylcob(III)alamin + GMP + H(+). The enzyme catalyses alpha-ribazole 5'-phosphate + adenosylcob(III)inamide-GDP = adenosylcob(III)alamin 5'-phosphate + GMP + H(+). It participates in cofactor biosynthesis; adenosylcobalamin biosynthesis; adenosylcobalamin from cob(II)yrinate a,c-diamide: step 7/7. Functionally, joins adenosylcobinamide-GDP and alpha-ribazole to generate adenosylcobalamin (Ado-cobalamin). Also synthesizes adenosylcobalamin 5'-phosphate from adenosylcobinamide-GDP and alpha-ribazole 5'-phosphate. The sequence is that of Adenosylcobinamide-GDP ribazoletransferase from Saccharolobus solfataricus (strain ATCC 35092 / DSM 1617 / JCM 11322 / P2) (Sulfolobus solfataricus).